Here is a 74-residue protein sequence, read N- to C-terminus: Small ribosomal subunit protein uS15 (74 aa).

This sequence belongs to the universal ribosomal protein uS15 family. In terms of assembly, part of the 30S ribosomal subunit. Forms a bridge to the 50S subunit in the 70S ribosome, contacting the 23S rRNA.

One of the primary rRNA binding proteins, it binds directly to 16S rRNA where it helps nucleate assembly of the platform of the 30S subunit by binding and bridging several RNA helices of the 16S rRNA. Functionally, forms an intersubunit bridge (bridge B4) with the 23S rRNA of the 50S subunit in the ribosome. This is Small ribosomal subunit protein uS15 from Aster yellows witches'-broom phytoplasma (strain AYWB).